The following is a 150-amino-acid chain: Endoribonuclease YbeY (150 aa).

Zn(2+) contacts are provided by H108, H112, and H118.

It belongs to the endoribonuclease YbeY family. Requires Zn(2+) as cofactor.

Its subcellular location is the cytoplasm. Functionally, single strand-specific metallo-endoribonuclease involved in late-stage 70S ribosome quality control and in maturation of the 3' terminus of the 16S rRNA. In Methylococcus capsulatus (strain ATCC 33009 / NCIMB 11132 / Bath), this protein is Endoribonuclease YbeY.